We begin with the raw amino-acid sequence, 368 residues long: Chorismate synthase (368 aa).

Residues R48 and R54 each coordinate NADP(+). Residues 131–133 (RSS), 243–244 (NA), G292, 307–311 (KPTSS), and R333 contribute to the FMN site.

The protein belongs to the chorismate synthase family. In terms of assembly, homotetramer. It depends on FMNH2 as a cofactor.

The enzyme catalyses 5-O-(1-carboxyvinyl)-3-phosphoshikimate = chorismate + phosphate. Its pathway is metabolic intermediate biosynthesis; chorismate biosynthesis; chorismate from D-erythrose 4-phosphate and phosphoenolpyruvate: step 7/7. Functionally, catalyzes the anti-1,4-elimination of the C-3 phosphate and the C-6 proR hydrogen from 5-enolpyruvylshikimate-3-phosphate (EPSP) to yield chorismate, which is the branch point compound that serves as the starting substrate for the three terminal pathways of aromatic amino acid biosynthesis. This reaction introduces a second double bond into the aromatic ring system. In Nitrobacter winogradskyi (strain ATCC 25391 / DSM 10237 / CIP 104748 / NCIMB 11846 / Nb-255), this protein is Chorismate synthase.